Here is a 101-residue protein sequence, read N- to C-terminus: Phosphoribosyl-AMP cyclohydrolase (101 aa).

D71 serves as a coordination point for Mg(2+). Residue C72 coordinates Zn(2+). Residues D73 and D75 each contribute to the Mg(2+) site. C88 and C95 together coordinate Zn(2+).

This sequence belongs to the PRA-CH family. As to quaternary structure, homodimer. It depends on Mg(2+) as a cofactor. Zn(2+) is required as a cofactor.

It is found in the cytoplasm. The catalysed reaction is 1-(5-phospho-beta-D-ribosyl)-5'-AMP + H2O = 1-(5-phospho-beta-D-ribosyl)-5-[(5-phospho-beta-D-ribosylamino)methylideneamino]imidazole-4-carboxamide. It functions in the pathway amino-acid biosynthesis; L-histidine biosynthesis; L-histidine from 5-phospho-alpha-D-ribose 1-diphosphate: step 3/9. Its function is as follows. Catalyzes the hydrolysis of the adenine ring of phosphoribosyl-AMP. The protein is Phosphoribosyl-AMP cyclohydrolase of Bacillus cereus (strain G9842).